A 557-amino-acid polypeptide reads, in one-letter code: 2-succinyl-5-enolpyruvyl-6-hydroxy-3-cyclohexene-1-carboxylate synthase (557 aa).

The protein belongs to the TPP enzyme family. MenD subfamily. Homodimer. Mg(2+) serves as cofactor. The cofactor is Mn(2+). Requires thiamine diphosphate as cofactor.

The enzyme catalyses isochorismate + 2-oxoglutarate + H(+) = 5-enolpyruvoyl-6-hydroxy-2-succinyl-cyclohex-3-ene-1-carboxylate + CO2. Its pathway is quinol/quinone metabolism; 1,4-dihydroxy-2-naphthoate biosynthesis; 1,4-dihydroxy-2-naphthoate from chorismate: step 2/7. It functions in the pathway quinol/quinone metabolism; menaquinone biosynthesis. In terms of biological role, catalyzes the thiamine diphosphate-dependent decarboxylation of 2-oxoglutarate and the subsequent addition of the resulting succinic semialdehyde-thiamine pyrophosphate anion to isochorismate to yield 2-succinyl-5-enolpyruvyl-6-hydroxy-3-cyclohexene-1-carboxylate (SEPHCHC). The chain is 2-succinyl-5-enolpyruvyl-6-hydroxy-3-cyclohexene-1-carboxylate synthase from Serratia proteamaculans (strain 568).